A 311-amino-acid polypeptide reads, in one-letter code: Probable mitochondrial phosphate carrier protein (311 aa).

The Mitochondrial intermembrane portion of the chain corresponds to 1–23 (MSTPLIPPAPPKKTLQLYTPQYY). Solcar repeat units lie at residues 21 to 105 (QYYG…FKHK), 118 to 203 (YRTS…IVEA), and 219 to 303 (EKIG…FKIM). A helical transmembrane segment spans residues 24-44 (GLCTLGGLLACGTTHSAITPL). Over 45–67 (DLIKCRKQVNPNIYPGNIAGFKT) the chain is Mitochondrial matrix. Residues 68-88 (ILSKEGLRGLYTGGMPTLIGY) form a helical membrane-spanning segment. At 89–120 (SLQGCGKYGFYELFKHKYSTLVGAQKAHEYRT) the chain is on the mitochondrial intermembrane side. A helical membrane pass occupies residues 121–141 (SIYLAASASAELLADIMLCPM). Topologically, residues 142–171 (EAIKVRVQTSNPRFANTTREAWSKIVTNEG) are mitochondrial matrix. The helical transmembrane segment at 172-192 (FGTLYRGLAPLWFRQIPYTMM) threads the bilayer. The Mitochondrial intermembrane segment spans residues 193-220 (KFASFERIVEALYTYIGKPKNMYSKAEK). The chain crosses the membrane as a helical span at residues 221 to 241 (IGISFAGGYMAGVLCAIISHP). Residues 242–269 (ADVMVSKLNSNKKAGEGAGAAAARIYKE) are Mitochondrial matrix-facing. The helical transmembrane segment at 270–290 (IGFSGLWNGLGVRIVMIGTLT) threads the bilayer. Over 291 to 311 (GAQWLIYDSFKIMCGFPATGA) the chain is Mitochondrial intermembrane.

It belongs to the mitochondrial carrier (TC 2.A.29) family.

The protein resides in the mitochondrion inner membrane. Transport of phosphate groups from the cytosol to the mitochondrial matrix. This Schizosaccharomyces pombe (strain 972 / ATCC 24843) (Fission yeast) protein is Probable mitochondrial phosphate carrier protein.